Reading from the N-terminus, the 601-residue chain is Elongation factor 4 (601 aa).

Residues 7 to 189 (DRIRNFSIIA…ALVTRLPAPK (183 aa)) form the tr-type G domain. Residues 19–24 (DHGKST) and 136–139 (NKVD) each bind GTP.

Belongs to the TRAFAC class translation factor GTPase superfamily. Classic translation factor GTPase family. LepA subfamily.

The protein resides in the cell inner membrane. The catalysed reaction is GTP + H2O = GDP + phosphate + H(+). Functionally, required for accurate and efficient protein synthesis under certain stress conditions. May act as a fidelity factor of the translation reaction, by catalyzing a one-codon backward translocation of tRNAs on improperly translocated ribosomes. Back-translocation proceeds from a post-translocation (POST) complex to a pre-translocation (PRE) complex, thus giving elongation factor G a second chance to translocate the tRNAs correctly. Binds to ribosomes in a GTP-dependent manner. This Granulibacter bethesdensis (strain ATCC BAA-1260 / CGDNIH1) protein is Elongation factor 4.